Consider the following 320-residue polypeptide: Probable cell division protein WhiA (320 aa).

The H-T-H motif DNA-binding region spans 282–315; it reads SLEELGRAARPQISKDAVAGRIRRLLQRAEKAEQ.

This sequence belongs to the WhiA family.

In terms of biological role, involved in cell division and chromosome segregation. The chain is Probable cell division protein WhiA from Bifidobacterium animalis subsp. lactis (strain AD011).